A 169-amino-acid chain; its full sequence is General odorant-binding protein 57a (169 aa).

Positions 1–20 are cleaved as a signal peptide; sequence MFNTRLAIFLLLIVVSLSQA. 3 disulfides stabilise this stretch: Cys-39–Cys-77, Cys-73–Cys-120, and Cys-111–Cys-129.

Belongs to the PBP/GOBP family.

Present in the aqueous fluid surrounding olfactory sensory dendrites and are thought to aid in the capture and transport of hydrophobic odorants into and through this fluid. The protein is General odorant-binding protein 57a of Drosophila melanogaster (Fruit fly).